The chain runs to 354 residues: Guanine nucleotide-binding protein G(i) subunit alpha (354 aa).

G2 carries N-myristoyl glycine lipidation. The S-palmitoyl cysteine moiety is linked to residue C3. One can recognise a G-alpha domain in the interval 32–354; the sequence is REVKLLLLGA…KNNLKDCGLF (323 aa). The interval 35-48 is G1 motif; it reads KLLLLGAGESGKST. GTP contacts are provided by residues 40–47, 175–181, 200–204, 269–272, and A326; these read GAGESGKS, LRTRVKT, DVGGQ, and NKKD. S47 and T181 together coordinate Mg(2+). A G2 motif region spans residues 173–181; that stretch reads DVLRTRVKT. The G3 motif stretch occupies residues 196 to 205; it reads FKMFDVGGQR. A G4 motif region spans residues 265–272; it reads ILFLNKKD. Residues 324–329 are G5 motif; sequence TCATDT.

This sequence belongs to the G-alpha family. G(i/o/t/z) subfamily. In terms of assembly, g proteins are composed of 3 units; alpha, beta and gamma. The alpha chain contains the guanine nucleotide binding site.

Guanine nucleotide-binding proteins (G proteins) are involved as modulators or transducers in various transmembrane signaling systems. The G(i) proteins are involved in hormonal regulation of adenylate cyclase: they inhibit the cyclase in response to beta-adrenergic stimuli. The polypeptide is Guanine nucleotide-binding protein G(i) subunit alpha (Lymnaea stagnalis (Great pond snail)).